Consider the following 792-residue polypeptide: Ubiquitin carboxyl-terminal hydrolase 10 (792 aa).

The segment at 2–27 (TTQESIKPLVDRILSNPLQFNAAMIS) is DHR2-binding module. Disordered stretches follow at residues 64-87 (AESK…NTVP) and 103-320 (KDAA…SITP). The span at 107–129 (DATGAKKSAELSTELSTEPPSSS) shows a compositional bias: low complexity. Residues 109–145 (TGAKKSAELSTELSTEPPSSSSEDDKVGKEEEEEGEI) form an SIR4-binding module region. Residues 144–171 (EIFHEARDYVEPRKASLKERDNADKGDG) show a composition bias toward basic and acidic residues. The UTP22-binding module stretch occupies residues 167–208 (DKGDGEDIGEDIGEDIGEDIGEDIGEDIGENLGSPLATIDDS). Acidic residues predominate over residues 172–195 (EDIGEDIGEDIGEDIGEDIGEDIG). A compositionally biased stretch (basic and acidic residues) spans 211-220 (ENEKEKRKEL). Over residues 226–241 (SDDEIEDDEDEDDMDY) the composition is skewed to acidic residues. Positions 288-297 (VNNTKENGNR) are enriched in polar residues. Residues 362–733 (RGLLNHGVTC…NAYYLLYTRL (372 aa)) enclose the USP domain. Catalysis depends on Cys-371, which acts as the Nucleophile. The disordered stretch occupies residues 526–563 (LDPNSDLSSDSINGTSATTSTTTSNAATKPSLSSSSSV). The span at 530 to 539 (SDLSSDSING) shows a compositional bias: polar residues. A compositionally biased stretch (low complexity) spans 540–563 (TSATTSTTTSNAATKPSLSSSSSV). The active-site Proton acceptor is His-691. The segment covering 749–766 (TGNVTSKSKQEQAVNEPN) has biased composition (polar residues). The interval 749–792 (TGNVTSKSKQEQAVNEPNNRPLKINSKKNNRKKWKKNKKRKFTK) is disordered. Basic residues predominate over residues 773–792 (NSKKNNRKKWKKNKKRKFTK).

It belongs to the peptidase C19 family. Interacts with SIR4. Interacts with the proliferating-cell nuclear antigen PCNA/POL30. Interacts with DHR2 and UTP22.

It localises to the nucleus. The protein resides in the chromosome. The protein localises to the telomere. It is found in the nucleolus. The enzyme catalyses Thiol-dependent hydrolysis of ester, thioester, amide, peptide and isopeptide bonds formed by the C-terminal Gly of ubiquitin (a 76-residue protein attached to proteins as an intracellular targeting signal).. In terms of biological role, deubiquitinating enzyme involved in telomere and HM loci silencing, which is the repression of chromatin structure which leads to a stop in the transcription of nearby genes. Targets histone H2B for deubiquitination, thus helping to localize SIR2 to the telomere. At silent chromatin, including telomeres and the rDNA locus, not only maintains low H2B 'Lys-123' ubiquitination (H2BK123Ub), but also low H3 'Lys-4' and 'Lys-79' methylation (H3K4me and H3K79me, respectively). Controls the proliferating-cell nuclear antigen PCNA/POL30 deubiquitination which is crucial for keeping TLS polymerases in check as well as for down-regulating the error-free bypass. Deubiquitinates and stabilizes RPA190, the largest subunit of RNA polymerase I, to achieve optimal levels of ribosomes and cell growth. Also protects nutrient transporters such as GAP1 from ubiquitin-dependent endocytosis. The sequence is that of Ubiquitin carboxyl-terminal hydrolase 10 (UBP10) from Saccharomyces cerevisiae (strain ATCC 204508 / S288c) (Baker's yeast).